Reading from the N-terminus, the 208-residue chain is Large ribosomal subunit protein bL25 (208 aa).

The disordered stretch occupies residues 188-208 (AVETETEEETTTGESPAQPAE).

Belongs to the bacterial ribosomal protein bL25 family. CTC subfamily. In terms of assembly, part of the 50S ribosomal subunit; part of the 5S rRNA/L5/L18/L25 subcomplex. Contacts the 5S rRNA. Binds to the 5S rRNA independently of L5 and L18.

This is one of the proteins that binds to the 5S RNA in the ribosome where it forms part of the central protuberance. This chain is Large ribosomal subunit protein bL25, found in Moorella thermoacetica (strain ATCC 39073 / JCM 9320).